Here is a 418-residue protein sequence, read N- to C-terminus: Phosphatidylcholine:ceramide cholinephosphotransferase 1 (418 aa).

Positions 12 to 75 constitute an SAM domain; sequence WSPKKVADWL…LDMIETLKME (64 aa). A Phosphoserine modification is found at Ser-13. Helical transmembrane passes span 141–161, 189–209, 220–240, 281–301, and 309–329; these read FLAF…ISVV, FSIC…QWLL, FFCI…VTTL, MCGD…YLFI, and LWWY…CILL. His-290 is an active-site residue. Active-site residues include His-333 and Asp-337. The helical transmembrane segment at 335–352 threads the bilayer; it reads TVDVVVAYYITTRLFWWY.

Belongs to the sphingomyelin synthase family. As to expression, widely expressed. Highest expression in the cardiovascular system.

It is found in the golgi apparatus membrane. The catalysed reaction is an N-acylsphing-4-enine + a 1,2-diacyl-sn-glycero-3-phosphocholine = a sphingomyelin + a 1,2-diacyl-sn-glycerol. It catalyses the reaction 1-(9Z-octadecenoyl)-2-acyl-sn-3-glycerol + a sphingomyelin = a 1-(9Z-octadecenoyl)-2-acyl-sn-glycero-3-phosphocholine + an N-acylsphing-4-enine. It carries out the reaction N-hexadecanoylsphinganine + a 1,2-diacyl-sn-glycero-3-phosphocholine = N-hexadecanoyl-sphinganine-1-phosphocholine + a 1,2-diacyl-sn-glycerol. The enzyme catalyses N-hexadecanoyl-(4R)-hydroxysphinganine + a 1,2-diacyl-sn-glycero-3-phosphocholine = N-hexadecanoyl-(4R)-hydroxysphinganine-phosphocholine + a 1,2-diacyl-sn-glycerol. The catalysed reaction is an N-acylsphing-4-enine + a 1,2-diacyl-sn-glycero-3-phosphoethanolamine = an N-acylsphing-4-enine 1-phosphoethanolamine + a 1,2-diacyl-sn-glycerol. Its pathway is sphingolipid metabolism. In terms of biological role, major sphingomyelin synthase at the Golgi apparatus. Catalyzes the reversible transfer of phosphocholine moiety in sphingomyelin biosynthesis: in the forward reaction transfers phosphocholine head group of phosphatidylcholine (PC) on to ceramide (CER) to form ceramide phosphocholine (sphingomyelin, SM) and diacylglycerol (DAG) as by-product, and in the reverse reaction transfers phosphocholine from SM to DAG to form PC and CER. The direction of the reaction depends on the levels of CER and DAG in Golgi membranes. Converts the newly synthesized CER, that is transported from the endoplasmic reticulum to the trans-Golgi by the Cer transport protein (CERT), to SM. Can form a heteromeric complex with glucosylceramide synthase (GCS) increasing SMS activity and reducing glucosylceramide synthesis, a critical mechanism that controls the metabolic fate of CER in the Golgi. Does not use free phosphorylcholine or CDP-choline as donor. Can also transfer phosphoethanolamine head group of phosphatidylethanolamine (PE) on to CER to form ceramide phosphoethanolamine (CPE). Regulates receptor-mediated signal transduction via mitogenic DAG and proapoptotic CER, as well as via SM, a structural component of membrane rafts that serve as platforms for signal transduction and protein sorting. Plays a role in secretory transport via regulation of DAG pool at the Golgi apparatus and its downstream effects on PRKD1. The protein is Phosphatidylcholine:ceramide cholinephosphotransferase 1 (SGMS1) of Sus scrofa (Pig).